The sequence spans 430 residues: MLYEKFEYNINNLVGNFGLSKIAIAVSGGSDSVALLYLANIWAEKNNIELFIISVDHNLRAQSKQENYYIQSISNNLKRKYYNLSFDHQNNFSNLQARAREGRYDLMTNLCLELDVLVLLTAHHEDDYVENFCLRLERNSGIFGLSSSNIHWYNNIQIIRPLYNIPKSELVKYLVTNKIKWFEDESNLSDKYRRNIIRQKLFKEENYIKAEISVQQLKTNKLIEDELKPELISAIGEAVKIFEYGFTFLDLVKFDKFSNEVKVQIINFLLIMISGQSRSARFYSIAPILKLISQNVNFKKTVHGCVITRIQNELLIYREFGKKLPKSKILLDKSVIWDNRFCITKNQETPDCVITYLSLEDYKVIKKQLDLKHLKNLSCKNHNAILFTLPIIKILEKVIAIPHISYYDNDMWNFEVSFAPNFVSRFTHFC.

Residue 27 to 32 (SGGSDS) participates in ATP binding.

The protein belongs to the tRNA(Ile)-lysidine synthase family.

It localises to the cytoplasm. It carries out the reaction cytidine(34) in tRNA(Ile2) + L-lysine + ATP = lysidine(34) in tRNA(Ile2) + AMP + diphosphate + H(+). Its function is as follows. Ligates lysine onto the cytidine present at position 34 of the AUA codon-specific tRNA(Ile) that contains the anticodon CAU, in an ATP-dependent manner. Cytidine is converted to lysidine, thus changing the amino acid specificity of the tRNA from methionine to isoleucine. This Rickettsia typhi (strain ATCC VR-144 / Wilmington) protein is tRNA(Ile)-lysidine synthase.